The following is a 209-amino-acid chain: NAD-reducing hydrogenase HoxS subunit delta (209 aa).

As to quaternary structure, tetramer of an alpha and a gamma subunits (flavin-containing dimer), and a delta and a nickel-containing beta subunits (hydrogenase dimer). [4Fe-4S] cluster serves as cofactor. The cofactor is [3Fe-4S] cluster. Requires [2Fe-2S] cluster as cofactor. It depends on FMN as a cofactor. Ni(2+) is required as a cofactor.

Its subcellular location is the cytoplasm. The catalysed reaction is H2 + NAD(+) = NADH + H(+). The polypeptide is NAD-reducing hydrogenase HoxS subunit delta (hoxY) (Cupriavidus necator (strain ATCC 17699 / DSM 428 / KCTC 22496 / NCIMB 10442 / H16 / Stanier 337) (Ralstonia eutropha)).